The sequence spans 394 residues: Bone morphogenetic protein 2 (394 aa).

The signal sequence occupies residues M1 to G19. The propeptide at G20–R280 is cleaved by PCSK5. S86 is modified (phosphoserine). 3 N-linked (GlcNAc...) asparagine glycosylation sites follow: N134, N162, and N198. Positions G269–K291 are disordered. Positions H272–K291 are enriched in basic residues. 3 disulfide bridges follow: C294-C359, C323-C391, and C327-C393. N336 is a glycosylation site (N-linked (GlcNAc...) asparagine).

This sequence belongs to the TGF-beta family. Homodimer; disulfide-linked. Interacts with SOSTDC1. Interacts with GREM2, RGMA, RGMB and RGMC. Interacts with ASPN. Interacts with MAFP5. Interacts with FBN1 (via N-terminal domain) and FBN2. Interacts with type I receptor BMPR1A. Interacts with type II receptor BMPR2. Interacts with SCUBE3. Interacts with TNFAIP6 (primarily via Link domain); this interaction is inhibited by hyaluronan. Interacts with ERFE. Interacts with BMPR1A/ALK3; the interaction may induce HAMP expression. Forms heterodimers with BMP6 in vitro; the heterodimer then binds to its receptor BMPR1A /ALK3 and may induce HAMP expression. Interacts with TGFBR3.

It is found in the secreted. Growth factor of the TGF-beta superfamily that plays essential roles in many developmental processes, including cardiogenesis, neurogenesis, and osteogenesis. Induces cartilage and bone formation. Initiates the canonical BMP signaling cascade by associating with type I receptor BMPR1A and type II receptor BMPR2. Once all three components are bound together in a complex at the cell surface, BMPR2 phosphorylates and activates BMPR1A. In turn, BMPR1A propagates signal by phosphorylating SMAD1/5/8 that travel to the nucleus and act as activators and repressors of transcription of target genes. Also acts to promote expression of HAMP, via the interaction with its receptor BMPR1A/ALK3. Can also signal through non-canonical pathways such as ERK/MAP kinase signaling cascade that regulates osteoblast differentiation. Also stimulates the differentiation of myoblasts into osteoblasts via the EIF2AK3-EIF2A-ATF4 pathway by stimulating EIF2A phosphorylation which leads to increased expression of ATF4 which plays a central role in osteoblast differentiation. Acts as a positive regulator of odontoblast differentiation during mesenchymal tooth germ formation, expression is repressed during the bell stage by MSX1-mediated inhibition of CTNNB1 signaling. In Mus musculus (Mouse), this protein is Bone morphogenetic protein 2 (Bmp2).